The chain runs to 218 residues: MSDIEIKGILGKKLGMTQIFDEENRVVPVTVVEAGPCVVTQVRSKETDGYEAVQIAFGEIDPRKVNKPAAGHFKKAGVTPRRHVAEIRVADASSYEVGQDVTVDIFNDVKFVDVTGTTKGKGYAGGMKRHGFAGQGAAHGNQAAHRRVGSIGQAATPGRVFKGKRMAGRMGNDRVTQQNLKLAKVDAESNLLLIKGAVPGVNGGLVVVKTAVKGGAHA.

It belongs to the universal ribosomal protein uL3 family. As to quaternary structure, part of the 50S ribosomal subunit. Forms a cluster with proteins L14 and L19.

Its function is as follows. One of the primary rRNA binding proteins, it binds directly near the 3'-end of the 23S rRNA, where it nucleates assembly of the 50S subunit. This is Large ribosomal subunit protein uL3 from Corynebacterium jeikeium (strain K411).